A 312-amino-acid polypeptide reads, in one-letter code: Malate dehydrogenase (312 aa).

NAD(+) is bound by residues Gly7–Gly13 and Asp34. Residues Arg81 and Arg87 each contribute to the substrate site. Residues Asn94 and Ile117–Asn119 contribute to the NAD(+) site. Substrate is bound by residues Asn119 and Arg153. The active-site Proton acceptor is the His177. Met227 lines the NAD(+) pocket.

Belongs to the LDH/MDH superfamily. MDH type 1 family. As to quaternary structure, homodimer.

The enzyme catalyses (S)-malate + NAD(+) = oxaloacetate + NADH + H(+). Its function is as follows. Catalyzes the reversible oxidation of malate to oxaloacetate. The sequence is that of Malate dehydrogenase from Enterobacter sp. (strain 638).